The following is a 144-amino-acid chain: Putative HTH-type transcriptional regulator aq_268 (144 aa).

In terms of domain architecture, HTH rrf2-type spans 2-133 (IFSDTVRYAL…KGTTIKDLIN (132 aa)).

The polypeptide is Putative HTH-type transcriptional regulator aq_268 (Aquifex aeolicus (strain VF5)).